Consider the following 146-residue polypeptide: Hemoglobin subunit delta (146 aa).

Residues 2-146 (HLTGEEKSAV…VATALAHKYH (145 aa)) form the Globin domain. Residue Ser50 is modified to Phosphoserine. Residues His63 and His92 each contribute to the heme b site.

This sequence belongs to the globin family. In terms of assembly, heterotetramer of two delta chains and two alpha chains. In terms of tissue distribution, red blood cells.

The chain is Hemoglobin subunit delta (HBD) from Leontocebus nigricollis (Black-mantled tamarin).